Reading from the N-terminus, the 317-residue chain is Aspartate carbamoyltransferase catalytic subunit (317 aa).

The carbamoyl phosphate site is built by arginine 66 and threonine 67. Lysine 94 lines the L-aspartate pocket. Residues arginine 116, histidine 144, and glutamine 147 each contribute to the carbamoyl phosphate site. Residues arginine 177 and arginine 231 each coordinate L-aspartate. Positions 272 and 273 each coordinate carbamoyl phosphate.

The protein belongs to the aspartate/ornithine carbamoyltransferase superfamily. ATCase family. Heterododecamer (2C3:3R2) of six catalytic PyrB chains organized as two trimers (C3), and six regulatory PyrI chains organized as three dimers (R2).

The enzyme catalyses carbamoyl phosphate + L-aspartate = N-carbamoyl-L-aspartate + phosphate + H(+). Its pathway is pyrimidine metabolism; UMP biosynthesis via de novo pathway; (S)-dihydroorotate from bicarbonate: step 2/3. In terms of biological role, catalyzes the condensation of carbamoyl phosphate and aspartate to form carbamoyl aspartate and inorganic phosphate, the committed step in the de novo pyrimidine nucleotide biosynthesis pathway. The protein is Aspartate carbamoyltransferase catalytic subunit of Beijerinckia indica subsp. indica (strain ATCC 9039 / DSM 1715 / NCIMB 8712).